Consider the following 393-residue polypeptide: Chalcone synthase DIII (393 aa).

C164 is a catalytic residue.

Belongs to the thiolase-like superfamily. Chalcone/stilbene synthases family.

It carries out the reaction (E)-4-coumaroyl-CoA + 3 malonyl-CoA + 3 H(+) = 2',4,4',6'-tetrahydroxychalcone + 3 CO2 + 4 CoA. Its pathway is secondary metabolite biosynthesis; flavonoid biosynthesis. Functionally, the primary product of this enzyme is 4,2',4',6'-tetrahydroxychalcone (also termed naringenin-chalcone or chalcone) which can under specific conditions spontaneously isomerize into naringenin. The chain is Chalcone synthase DIII (CHS-DIII) from Ipomoea batatas (Sweet potato).